The chain runs to 228 residues: Vesicle transport protein SEC20 (228 aa).

Topologically, residues 1–199 (MAAPQDVHVR…LITKYNRREL (199 aa)) are cytoplasmic. Positions 37-90 (LSELTELNTKVKEKFQQLKQRIQELEQSAREQDKESEKQLLLQEVENHKKQMLS) form a coiled coil. A helical; Anchor for type IV membrane protein transmembrane segment spans residues 200-220 (TDKLLIFLALALFLATVLYIV). Residues 221-228 (KKRLFPFL) are Lumenal-facing.

Belongs to the SEC20 family. As to quaternary structure, component of a SNARE complex consisting of STX18, USE1L, BNIP1/SEC20L and SEC22B. Interacts directly with STX18, RINT1/TIP20L and NAPA. Interacts with ZW10 through RINT1. Interacts with BCL2. Interacts with RNF186. Interacts with RNF185. Interacts with SQSTM1; increased by 'Lys-63'-linked polyubiquitination of BNIP1. Post-translationally, polyubiquitinated. 'Lys-63'-linked polyubiquitination by RNF185 increases the interaction with the autophagy receptor SQSTM1. Undergoes 'Lys-29'- and 'Lys-63'-linked polyubiquitination by RNF186 that may regulate BNIP1 localization to the mitochondrion.

The protein resides in the endoplasmic reticulum membrane. It is found in the mitochondrion membrane. Its function is as follows. As part of a SNARE complex may be involved in endoplasmic reticulum membranes fusion and be required for the maintenance of endoplasmic reticulum organization. Also plays a role in apoptosis. It is for instance required for endoplasmic reticulum stress-induced apoptosis. As a substrate of RNF185 interacting with SQSTM1, might also be involved in mitochondrial autophagy. This Mus musculus (Mouse) protein is Vesicle transport protein SEC20.